The sequence spans 1141 residues: DNA-directed RNA polymerase subunit beta (1141 aa).

It belongs to the RNA polymerase beta chain family. The RNAP catalytic core consists of 2 alpha, 1 beta, 1 beta' and 1 omega subunit. When a sigma factor is associated with the core the holoenzyme is formed, which can initiate transcription.

The enzyme catalyses RNA(n) + a ribonucleoside 5'-triphosphate = RNA(n+1) + diphosphate. Functionally, DNA-dependent RNA polymerase catalyzes the transcription of DNA into RNA using the four ribonucleoside triphosphates as substrates. The sequence is that of DNA-directed RNA polymerase subunit beta from Frankia alni (strain DSM 45986 / CECT 9034 / ACN14a).